Consider the following 191-residue polypeptide: Dephospho-CoA kinase (191 aa).

Positions Ala3–Val191 constitute a DPCK domain. Ala11–Phe16 is a binding site for ATP.

Belongs to the CoaE family.

The protein localises to the cytoplasm. It catalyses the reaction 3'-dephospho-CoA + ATP = ADP + CoA + H(+). The protein operates within cofactor biosynthesis; coenzyme A biosynthesis; CoA from (R)-pantothenate: step 5/5. Catalyzes the phosphorylation of the 3'-hydroxyl group of dephosphocoenzyme A to form coenzyme A. This is Dephospho-CoA kinase from Rickettsia bellii (strain RML369-C).